The sequence spans 141 residues: Large ribosomal subunit protein uL11 (141 aa).

The protein belongs to the universal ribosomal protein uL11 family. In terms of assembly, part of the ribosomal stalk of the 50S ribosomal subunit. Interacts with L10 and the large rRNA to form the base of the stalk. L10 forms an elongated spine to which L12 dimers bind in a sequential fashion forming a multimeric L10(L12)X complex. One or more lysine residues are methylated.

Functionally, forms part of the ribosomal stalk which helps the ribosome interact with GTP-bound translation factors. The protein is Large ribosomal subunit protein uL11 of Synechococcus sp. (strain JA-2-3B'a(2-13)) (Cyanobacteria bacterium Yellowstone B-Prime).